Consider the following 107-residue polypeptide: Late histone H2B.L4 (107 aa).

O-linked (GlcNAc) serine glycosylation occurs at serine 94. Lysine 102 is covalently cross-linked (Glycyl lysine isopeptide (Lys-Gly) (interchain with G-Cter in ubiquitin)).

Belongs to the histone H2B family. As to quaternary structure, the nucleosome is a histone octamer containing two molecules each of H2A, H2B, H3 and H4 assembled in one H3-H4 heterotetramer and two H2A-H2B heterodimers. The octamer wraps approximately 147 bp of DNA. In terms of processing, monoubiquitination gives a specific tag for epigenetic transcriptional activation and is also prerequisite for histone H3 'Lys-4' and 'Lys-79' methylation. GlcNAcylation at Ser-94 promotes monoubiquitination of Lys-102. It fluctuates in response to extracellular glucose, and associates with transcribed genes.

Its subcellular location is the nucleus. It localises to the chromosome. Core component of nucleosome. Nucleosomes wrap and compact DNA into chromatin, limiting DNA accessibility to the cellular machineries which require DNA as a template. Histones thereby play a central role in transcription regulation, DNA repair, DNA replication and chromosomal stability. DNA accessibility is regulated via a complex set of post-translational modifications of histones, also called histone code, and nucleosome remodeling. This chain is Late histone H2B.L4, found in Strongylocentrotus purpuratus (Purple sea urchin).